Here is a 264-residue protein sequence, read N- to C-terminus: 3-methyl-2-oxobutanoate hydroxymethyltransferase (264 aa).

2 residues coordinate Mg(2+): aspartate 45 and aspartate 84. 3-methyl-2-oxobutanoate is bound by residues 45 to 46, aspartate 84, and lysine 112; that span reads DS. A Mg(2+)-binding site is contributed by glutamate 114. Glutamate 181 (proton acceptor) is an active-site residue.

The protein belongs to the PanB family. Homodecamer; pentamer of dimers. Requires Mg(2+) as cofactor.

It is found in the cytoplasm. The catalysed reaction is 3-methyl-2-oxobutanoate + (6R)-5,10-methylene-5,6,7,8-tetrahydrofolate + H2O = 2-dehydropantoate + (6S)-5,6,7,8-tetrahydrofolate. It functions in the pathway cofactor biosynthesis; (R)-pantothenate biosynthesis; (R)-pantoate from 3-methyl-2-oxobutanoate: step 1/2. Its function is as follows. Catalyzes the reversible reaction in which hydroxymethyl group from 5,10-methylenetetrahydrofolate is transferred onto alpha-ketoisovalerate to form ketopantoate. The protein is 3-methyl-2-oxobutanoate hydroxymethyltransferase of Aeromonas salmonicida (strain A449).